Consider the following 331-residue polypeptide: Low affinity immunoglobulin epsilon Fc receptor (331 aa).

Residues 1 to 23 are Cytoplasmic-facing; sequence MEENEYSGYWEPPRKRCCCARRG. 2 S-palmitoyl cysteine lipidation sites follow: C17 and C18. Residues 24–49 traverse the membrane as a helical; Signal-anchor for type II membrane protein segment; that stretch reads TQLMLVGLLSTAMWAGLLALLLLWHW. The Extracellular portion of the chain corresponds to 50–331; it reads ETEKNLKQLG…PTRPTPKSEP (282 aa). N-linked (GlcNAc...) asparagine glycosylation is present at N65. Repeats lie at residues 71-91, 92-112, and 113-133; these read KDLQ…VQMS, QNLQ…SRLS, and QNLT…SKLS. A glycan (N-linked (GlcNAc...) asparagine) is linked at N114. 4 cysteine pairs are disulfide-bonded: C183/C311, C186/C197, C214/C305, and C282/C296. One can recognise a C-type lectin domain in the interval 185–298; the sequence is ICPKNWLHFQ…GQWNDAFCRS (114 aa). Residues E272, N292, and D293 each contribute to the Ca(2+) site. The O-linked (Xyl...) (chondroitin sulfate) serine glycan is linked to S319.

As to quaternary structure, homotrimer. Interacts (via C-type lectin domain) with IGHE (via CH3 region); this interaction regulates IgE homeostasis. Interacts (via C-terminus) with CR2/CD21 (via Sushi domain 1 and 2). In terms of processing, N- and O-glycosylated.

The protein resides in the cell membrane. It is found in the secreted. Low-affinity receptor for immunoglobulin E (IgE) and CR2/CD21. Has essential roles in the regulation of IgE production and in the differentiation of B cells. On B cells, initiates IgE-dependent antigen uptake and presentation to T cells. On macrophages, upon IgE binding and antigen cross-linking induces intracellular killing of parasites through activation of L-Arginine-nitric oxide pathway. The sequence is that of Low affinity immunoglobulin epsilon Fc receptor (Fcer2) from Mus musculus (Mouse).